The sequence spans 363 residues: Protein CPn_1058/CP_0792/CPj1058/CpB1100 (363 aa).

The signal sequence occupies residues 1-27 (MKLYQTLRGIVLVSTGCIFLGMHGGYA).

It belongs to the chlamydial CPn_1058/CT_355/TC_0634 family.

This chain is Protein CPn_1058/CP_0792/CPj1058/CpB1100, found in Chlamydia pneumoniae (Chlamydophila pneumoniae).